A 118-amino-acid polypeptide reads, in one-letter code: MPIATPKQKTTQRIKMRIHKGDTVQVITGKDKGKTGEVLRTLPIENRVIVQGVNIRTRHVKPTQEGESGRIVTEEASVHASNVMLYSNKKKIASRVELVVEKDGSKKRRLKKTGELID.

The protein belongs to the universal ribosomal protein uL24 family. As to quaternary structure, part of the 50S ribosomal subunit.

One of two assembly initiator proteins, it binds directly to the 5'-end of the 23S rRNA, where it nucleates assembly of the 50S subunit. In terms of biological role, one of the proteins that surrounds the polypeptide exit tunnel on the outside of the subunit. This is Large ribosomal subunit protein uL24 from Prochlorococcus marinus (strain MIT 9313).